A 92-amino-acid chain; its full sequence is Small ribosomal subunit protein uS19c (92 aa).

The protein belongs to the universal ribosomal protein uS19 family.

The protein resides in the plastid. Its subcellular location is the chloroplast. Protein S19 forms a complex with S13 that binds strongly to the 16S ribosomal RNA. The protein is Small ribosomal subunit protein uS19c of Calycanthus floridus var. glaucus (Eastern sweetshrub).